Consider the following 1003-residue polypeptide: Serine/threonine-protein kinase spk-1 (1003 aa).

Disordered stretches follow at residues 92-112 (NSTNEEEEISSQEINTSTQNE), 169-309 (NEND…SATS), and 337-408 (RPSI…KRGG). The span at 202-211 (SDEEDVESQD) shows a compositional bias: acidic residues. A compositionally biased stretch (basic and acidic residues) spans 248-265 (SNDDKNEKDVLVDEDTSK). A compositionally biased stretch (low complexity) spans 285–300 (TIDSSVSSSTSSSSTG). The span at 346-359 (KKTEVNANEERLDD) shows a compositional bias: basic and acidic residues. A Protein kinase domain is found at 422-904 (YHVIRKLGWG…AKIALKHPFL (483 aa)). ATP-binding positions include 428 to 436 (LGWGHFSTV) and lysine 451. The active-site Proton acceptor is the aspartate 555. Residues 927–1003 (DGLIPEPFDG…DIERFQLDLQ (77 aa)) are disordered. Residues 936–953 (GNEHQEVYRDENDSRSAS) are compositionally biased toward basic and acidic residues. Over residues 954 to 964 (ERSANSRSAGG) the composition is skewed to low complexity. The segment covering 983-992 (VITNNETTDI) has biased composition (polar residues). The span at 994–1003 (DIERFQLDLQ) shows a compositional bias: basic and acidic residues.

It belongs to the protein kinase superfamily. Ser/Thr protein kinase family. In terms of assembly, interacts with rsp-3. Predominantly coexpressed with rsp-3 in adult hermaphrodite germlines.

The enzyme catalyses L-seryl-[protein] + ATP = O-phospho-L-seryl-[protein] + ADP + H(+). It carries out the reaction L-threonyl-[protein] + ATP = O-phospho-L-threonyl-[protein] + ADP + H(+). Required for embryogenesis and germline development in both adult hermaphrodites and males. SR-protein kinase (SRPK) that binds directly to and phosphorylates the RS domain of rsp-3/CeSF2 in vitro. This chain is Serine/threonine-protein kinase spk-1 (spk-1), found in Caenorhabditis elegans.